A 2300-amino-acid chain; its full sequence is Adenylate cyclase (2300 aa).

Polar residues-rich tracts occupy residues 1 to 21 (MTRN…SSIT) and 28 to 41 (TPTS…TRPL). Disordered regions lie at residues 1-256 (MTRN…GSFL), 272-593 (GIRP…DLTR), and 631-652 (TKLF…MDED). Composition is skewed to low complexity over residues 42-61 (SPSL…VSRS) and 92-152 (SSQS…QVSP). The span at 153 to 169 (TGGSRLTQSPTTPSNAS) shows a compositional bias: polar residues. The span at 170 to 185 (IREHRMSELGGYRREM) shows a compositional bias: basic and acidic residues. A compositionally biased stretch (low complexity) spans 204 to 221 (QQQPQQPQQQQQQQQQQQ). Positions 228–237 (VSGTFSNLSQ) are enriched in polar residues. The segment covering 303-313 (SIASITTTASS) has biased composition (low complexity). Over residues 333–344 (GDRDDWPGRDSS) the composition is skewed to basic and acidic residues. Residues 345–357 (EISLPQPSHSGPM) are compositionally biased toward polar residues. Over residues 410–421 (PSRPRTPVPAPE) the composition is skewed to pro residues. Residues 455 to 469 (DSSQNPPKTSSSARS) are compositionally biased toward polar residues. Residues 484–501 (KSNEDPRALKPSLSREDS) show a composition bias toward basic and acidic residues. The span at 511 to 550 (NGSSSMMGTRSRAQSPAPSWTGTSRGLKANSISDGTSSPA) shows a compositional bias: polar residues. Over residues 552–565 (SHKKGILGRFRRHN) the composition is skewed to basic residues. Residues 631 to 643 (TKLFTSKKSSSAK) show a composition bias toward low complexity. The region spanning 749 to 841 (SNYYIRVFRS…IDEIGREDNS (93 aa)) is the Ras-associating domain. LRR repeat units lie at residues 867-890 (NQKL…LYRK), 892-914 (AEIV…FIQA), 915-938 (CTAL…FATA), 939-961 (SKLT…ELSK), 962-986 (LTGL…GAYK), 988-1008 (LRTL…ICEL), 1009-1031 (ETIV…LMKL), 1033-1055 (NLEK…VRDL), 1056-1079 (VSLR…DLPR), 1081-1097 (EILS…SGSF), 1098-1119 (ERLR…KAPV), 1120-1142 (PTLK…IDNL), 1143-1165 (MNLE…IGNL), 1166-1188 (KKLD…IGCL), 1189-1211 (TELR…IWWA), and 1213-1234 (KLEH…ASRA). Residues 1228-1336 (PKPASRAPQA…VITPSNGPRK (109 aa)) are disordered. Positions 1253–1263 (ANKNGLLSRTP) are enriched in polar residues. The segment covering 1313–1327 (TSVVSRSTTQSSTGV) has biased composition (low complexity). LRR repeat units lie at residues 1349–1369 (SGSL…VFEE), 1373–1396 (LPEL…TIRS), 1398–1420 (PQLV…DFLE), 1422–1445 (HCLL…ISRA), 1447–1469 (KLQV…PYDW), and 1474–1497 (NRDL…YRQP). A PPM-type phosphatase domain is found at 1552 to 1828 (PYGMADTLGK…NKLLIMMIGV (277 aa)). A disordered region spans residues 1847–1867 (FSMPQDDPSHVPPSGNKRRKV). Residues 1892–2029 (SIVFTDIKNS…PMVNKASRIS (138 aa)) form the Guanylate cyclase domain. Mg(2+) is bound by residues aspartate 1897 and aspartate 1940. Residues 2272–2300 (LDQAETDDATDNNSSGDVDTLDGSDTEQE) form a disordered region. Over residues 2290–2300 (DTLDGSDTEQE) the composition is skewed to acidic residues.

Belongs to the adenylyl cyclase class-4/guanylyl cyclase family. Requires Mg(2+) as cofactor.

It carries out the reaction ATP = 3',5'-cyclic AMP + diphosphate. In terms of biological role, plays essential roles in regulation of cellular metabolism by catalyzing the synthesis of a second messenger, cAMP. The protein is Adenylate cyclase (cr-1) of Neurospora crassa (strain ATCC 24698 / 74-OR23-1A / CBS 708.71 / DSM 1257 / FGSC 987).